We begin with the raw amino-acid sequence, 126 residues long: SH2 domain-containing protein 1A (126 aa).

The SH2 domain maps to 6–104; that stretch reads VYHGKISRET…VTPLQYPVEK (99 aa). An interaction with FYN SH3 domain region spans residues 67–92; the sequence is ETAPGVHKRFFRKVKNLISAFQKPDQ. Lys89 is subject to N6-acetyllysine. The interval 100–126 is disordered; sequence YPVEKSSGRGPQAPTGRRDSDICLNAP.

In terms of assembly, interacts with CD84, CD244, LY9, SLAMF1 and FYN. Interacts with NTRK1, NTRK2 and NTRK3. As to expression, T-cells.

Its subcellular location is the cytoplasm. Functionally, cytoplasmic adapter regulating receptors of the signaling lymphocytic activation molecule (SLAM) family such as SLAMF1, CD244, LY9, CD84, SLAMF6 and SLAMF7. In SLAM signaling seems to cooperate with SH2D1B/EAT-2. Initially it has been proposed that association with SLAMF1 prevents SLAMF1 binding to inhibitory effectors including INPP5D/SHIP1 and PTPN11/SHP-2. However, by simultaneous interactions, recruits FYN which subsequently phosphorylates and activates SLAMF1. Positively regulates CD244/2B4- and CD84-mediated natural killer (NK) cell functions. Can also promote CD48-, SLAMF6 -, LY9-, and SLAMF7-mediated NK cell activation. In the context of NK cell-mediated cytotoxicity enhances conjugate formation with target cells. May also regulate the activity of the neurotrophin receptors NTRK1, NTRK2 and NTRK3. In Mus musculus (Mouse), this protein is SH2 domain-containing protein 1A (Sh2d1a).